Reading from the N-terminus, the 122-residue chain is XTAVQTLDISPVGRVEGDLDSXSILEYFRNAILARFGGGLGKYAPFTGTNYEIGVTISGDKDPQAGLVVTPRESTTXGLNEPFYIKPYVSXGYIPHEDGALAHXIEVDGVVVEAYTQAELFR.

It depends on Fe cation as a cofactor.

The enzyme catalyses 2 Fe(III)-[cytochrome c3] + H2 = 2 Fe(II)-[cytochrome c3] + 2 H(+). The protein is Cytochrome c3 hydrogenase large chain (hoxG) of Acidithiobacillus ferrooxidans (Thiobacillus ferrooxidans).